We begin with the raw amino-acid sequence, 206 residues long: Ribosomal RNA large subunit methyltransferase E (206 aa).

G60, W62, D80, D96, and D121 together coordinate S-adenosyl-L-methionine. Catalysis depends on K161, which acts as the Proton acceptor.

It belongs to the class I-like SAM-binding methyltransferase superfamily. RNA methyltransferase RlmE family.

Its subcellular location is the cytoplasm. It carries out the reaction uridine(2552) in 23S rRNA + S-adenosyl-L-methionine = 2'-O-methyluridine(2552) in 23S rRNA + S-adenosyl-L-homocysteine + H(+). In terms of biological role, specifically methylates the uridine in position 2552 of 23S rRNA at the 2'-O position of the ribose in the fully assembled 50S ribosomal subunit. In Stutzerimonas stutzeri (strain A1501) (Pseudomonas stutzeri), this protein is Ribosomal RNA large subunit methyltransferase E.